The chain runs to 362 residues: 3-dehydroquinate synthase (362 aa).

Residues 70-75 (EGEQYK), 104-108 (GVIGD), 128-129 (TT), K141, K150, and 168-171 (TLTT) contribute to the NAD(+) site. Zn(2+)-binding residues include E183, H246, and H263.

The protein belongs to the sugar phosphate cyclases superfamily. Dehydroquinate synthase family. Requires Co(2+) as cofactor. Zn(2+) is required as a cofactor. The cofactor is NAD(+).

The protein resides in the cytoplasm. It catalyses the reaction 7-phospho-2-dehydro-3-deoxy-D-arabino-heptonate = 3-dehydroquinate + phosphate. It participates in metabolic intermediate biosynthesis; chorismate biosynthesis; chorismate from D-erythrose 4-phosphate and phosphoenolpyruvate: step 2/7. Its function is as follows. Catalyzes the conversion of 3-deoxy-D-arabino-heptulosonate 7-phosphate (DAHP) to dehydroquinate (DHQ). This is 3-dehydroquinate synthase from Histophilus somni (strain 2336) (Haemophilus somnus).